The sequence spans 366 residues: Mitochondrial substrate carrier family protein H (366 aa).

Low complexity predominate over residues 1-25; that stretch reads MLSNSVNNNNNNNNINNSNSNNNDS. A disordered region spans residues 1 to 26; it reads MLSNSVNNNNNNNNINNSNSNNNDSN. Solcar repeat units follow at residues 29-121, 132-243, and 259-360; these read KNVK…LKEY, NIYT…LKNK, and SPFF…IKQS. A run of 6 helical transmembrane segments spans residues 35-55, 96-112, 133-151, 175-192, 262-282, and 340-357; these read MVAS…LDVV, GVTP…TIYF, IYTV…SASV, VAMA…IPLS, FINF…TTPI, and VAKV…FEYI.

It belongs to the mitochondrial carrier (TC 2.A.29) family.

The protein localises to the mitochondrion inner membrane. Functionally, mitochondrial transporter required for glutathione import into mitochondria. The protein is Mitochondrial substrate carrier family protein H of Dictyostelium discoideum (Social amoeba).